The following is a 160-amino-acid chain: Protein BOLA1, chloroplastic (160 aa).

Residues 1–50 (MFSSSIRLIVSGFHRTQPLKSPVNSPSVFISVPKFFNSESKSTGTGSRSV) constitute a chloroplast transit peptide. Residues 39 to 61 (ESKSTGTGSRSVAMSSVEKTGSD) show a composition bias toward polar residues. The tract at residues 39–66 (ESKSTGTGSRSVAMSSVEKTGSDSGAIE) is disordered.

It belongs to the bolA/yrbA family. In terms of assembly, interacts in vitro with GRXS14, GRXS15, GRXS16 and GRXS17, but not with GRXC5. Interacts in vivo only with GRXS14 and GRXS16.

It localises to the plastid. The protein localises to the chloroplast. May act either alone or in interaction with glutaredoxin as a redox-regulated transcriptional regulator, or as a factor regulating Fe-S cluster biogenesis. The glutaredoxin-BOLA1 heterodimers bind a labile, oxygen sensitive iron-sulfur cluster. This is Protein BOLA1, chloroplastic from Arabidopsis thaliana (Mouse-ear cress).